Consider the following 747-residue polypeptide: DNA topoisomerase 4 subunit A (747 aa).

One can recognise a Topo IIA-type catalytic domain in the interval 35–498 (LPFIGDGLKP…EAKMISESDM (464 aa)). The O-(5'-phospho-DNA)-tyrosine intermediate role is filled by Tyr-124.

Belongs to the type II topoisomerase GyrA/ParC subunit family. ParC type 1 subfamily. As to quaternary structure, heterotetramer composed of ParC and ParE.

It localises to the cell membrane. It carries out the reaction ATP-dependent breakage, passage and rejoining of double-stranded DNA.. Topoisomerase IV is essential for chromosome segregation. It relaxes supercoiled DNA. Performs the decatenation events required during the replication of a circular DNA molecule. This Haemophilus influenzae (strain ATCC 51907 / DSM 11121 / KW20 / Rd) protein is DNA topoisomerase 4 subunit A.